A 1016-amino-acid polypeptide reads, in one-letter code: Probably inactive leucine-rich repeat receptor-like protein kinase At3g28040 (1016 aa).

The N-terminal stretch at 1 to 26 (MGKQRRTMISFTLFLTLTMMSSLING) is a signal peptide. The Extracellular segment spans residues 27–646 (DTDSIQLNDD…FHRRMFLSVS (620 aa)). LRR repeat units lie at residues 102–124 (RLKV…SNNN), 125–147 (HLQK…LGSI), 149–171 (SLQH…LFNN), 174–196 (SLRY…LFRC), 198–219 (VLNS…VSGI), 224–245 (RLRA…GILS), 248–270 (NLKE…IGLC), 272–295 (HLNR…QKLK), 296–318 (SLNH…IGDM), 320–342 (GLVH…ISNL), 344–366 (SLKD…LESC), 368–390 (ELMI…FFDL), 391–413 (GLQE…SSRL), 416–438 (SLIR…VGLF), 440–462 (HMRY…IEFL), 464–486 (NLTV…ICES), 488–510 (SLQI…IGNC), 512–535 (SLKL…SNLQ), 536–559 (ELKI…GDLQ), and 560–582 (NLLL…DVFQ). Asparagine 112, asparagine 135, and asparagine 171 each carry an N-linked (GlcNAc...) asparagine glycan. Asparagine 203 carries an N-linked (GlcNAc...) asparagine glycan. N-linked (GlcNAc...) asparagine glycosylation is present at asparagine 349. Asparagine 445, asparagine 464, asparagine 509, and asparagine 522 each carry an N-linked (GlcNAc...) asparagine glycan. Asparagine 565 is a glycosylation site (N-linked (GlcNAc...) asparagine). Residues 647 to 667 (VIVAISAAILIFSGVIIITLL) form a helical membrane-spanning segment. The Cytoplasmic segment spans residues 668 to 1016 (NASVRRRLAF…PVPHRIMDSF (349 aa)). In terms of domain architecture, Protein kinase spans 726-1013 (LNKASRIGEG…INSPVPHRIM (288 aa)). ATP-binding positions include 732–740 (IGEGVFGTV) and lysine 755. A phosphotyrosine mark is found at tyrosine 841 and tyrosine 898.

This sequence belongs to the protein kinase superfamily. Ser/Thr protein kinase family.

The protein resides in the membrane. The sequence is that of Probably inactive leucine-rich repeat receptor-like protein kinase At3g28040 from Arabidopsis thaliana (Mouse-ear cress).